Reading from the N-terminus, the 88-residue chain is U-scoloptoxin(01)-Tl1a (88 aa).

The first 16 residues, 1–16 (MSVYGLLSLLIFIVLA), serve as a signal peptide directing secretion. Residues 25–81 (GKDCSEKEEYLYDSSNCDIFYECDESLKPQRMMCGPGTGWNQDKLVCDFLTNIDCTR) form the Chitin-binding type-2 domain. The cysteines at positions 58 and 71 are disulfide-linked.

It belongs to the scoloptoxin-01 family. Contains 3 disulfide bonds. In terms of tissue distribution, expressed by the venom gland.

The protein resides in the secreted. The sequence is that of U-scoloptoxin(01)-Tl1a from Thereuopoda longicornis (Long-legged centipede).